The following is an 895-amino-acid chain: Probable inorganic carbon transporter subunit DabA 1 (895 aa).

Zn(2+) is bound by residues C398, D400, H581, and C596.

The protein belongs to the inorganic carbon transporter (TC 9.A.2) DabA family. Forms a complex with DabB. Zn(2+) serves as cofactor.

The protein localises to the cell inner membrane. Functionally, part of an energy-coupled inorganic carbon pump. The sequence is that of Probable inorganic carbon transporter subunit DabA 1 from Rhodopirellula baltica (strain DSM 10527 / NCIMB 13988 / SH1).